The sequence spans 200 residues: Dephospho-CoA kinase (200 aa).

In terms of domain architecture, DPCK spans 3-200 (IIGLTGGIGS…LWQRFATQVE (198 aa)). Residue 11-16 (GSGKST) participates in ATP binding.

The protein belongs to the CoaE family.

It localises to the cytoplasm. It catalyses the reaction 3'-dephospho-CoA + ATP = ADP + CoA + H(+). It participates in cofactor biosynthesis; coenzyme A biosynthesis; CoA from (R)-pantothenate: step 5/5. Functionally, catalyzes the phosphorylation of the 3'-hydroxyl group of dephosphocoenzyme A to form coenzyme A. This Corynebacterium diphtheriae (strain ATCC 700971 / NCTC 13129 / Biotype gravis) protein is Dephospho-CoA kinase.